The primary structure comprises 286 residues: Tryptophan 2,3-dioxygenase (286 aa).

Residues 55–59 (FIIIH), Tyr117, and Arg121 contribute to the substrate site. Residue His244 participates in heme binding. Thr258 lines the substrate pocket.

Belongs to the tryptophan 2,3-dioxygenase family. Homotetramer. It depends on heme as a cofactor.

It catalyses the reaction L-tryptophan + O2 = N-formyl-L-kynurenine. It participates in amino-acid degradation; L-tryptophan degradation via kynurenine pathway; L-kynurenine from L-tryptophan: step 1/2. Its function is as follows. Heme-dependent dioxygenase that catalyzes the oxidative cleavage of the L-tryptophan (L-Trp) pyrrole ring and converts L-tryptophan to N-formyl-L-kynurenine. Catalyzes the oxidative cleavage of the indole moiety. This chain is Tryptophan 2,3-dioxygenase, found in Shewanella woodyi (strain ATCC 51908 / MS32).